A 255-amino-acid polypeptide reads, in one-letter code: MKRLNKLVLGISFLFLVISITAGCGMGKEAEIKKSFEKTMSMYPIKNLEDLYDKEGYRDDQFDKNDKGTWIVNSQMAIQNKGEPMKSKGMVLYMNRNTRTTNGYYYVNVIKGEDKGKHQDNEKRYPVKMVDNKIILTKEIKDENIKIEIENFKFFVQYGNFKDLENYKDGDISYNPEVPSYSAKYQLTNDDYNVKQLRKRYDIPTNKAPKLLLKGTGNLKGSSVGYKDIEFTFVEKKEENIYFSDGLIFKPSEDK.

A signal peptide spans 1 to 23 (MKRLNKLVLGISFLFLVISITAG). C24 carries the N-palmitoyl cysteine lipid modification. C24 carries S-diacylglycerol cysteine lipidation.

Belongs to the staphylococcal tandem lipoprotein family.

The protein resides in the cell membrane. This is an uncharacterized protein from Staphylococcus aureus (strain N315).